A 307-amino-acid polypeptide reads, in one-letter code: MSSTPIKHYLQFSDFTPDEYEYLLDRARILKAKFKNYETWHPLHDRTLAMIFEKNSTRTRLSFEAGIHQLGGHAVFLNTRDSQLGRGEPIEDAAQVISRMVDIIMIRTFGQDIIDRFAAHSRVPVINGLTNEYHPCQVLADVFTYIEQRGSIRGKTVAWIGDANNMAYTWIQAAERLGFTFHFSAPPGYQLDPVMVPASASGLVKVFDDPLAACQGASLVTTDVWTSMGFEAENDARKRAFKDWMVTTAMMDRAEPDALFMHCLPAHRGEEVEAAVIDGPKSVVWDEAENRLHVQKALMEYLLCGRY.

Carbamoyl phosphate is bound by residues 56 to 59 (STRT), Gln83, Arg107, and 134 to 137 (HPCQ). Residues Asn165, Asp223, and 227-228 (SM) each bind L-ornithine. Carbamoyl phosphate is bound by residues 263–264 (CL) and Arg291.

Belongs to the aspartate/ornithine carbamoyltransferase superfamily. OTCase family.

The protein localises to the cytoplasm. The enzyme catalyses carbamoyl phosphate + L-ornithine = L-citrulline + phosphate + H(+). It functions in the pathway amino-acid degradation; L-arginine degradation via ADI pathway; carbamoyl phosphate from L-arginine: step 2/2. In terms of biological role, reversibly catalyzes the transfer of the carbamoyl group from carbamoyl phosphate (CP) to the N(epsilon) atom of ornithine (ORN) to produce L-citrulline. The polypeptide is Ornithine carbamoyltransferase (Cupriavidus taiwanensis (strain DSM 17343 / BCRC 17206 / CCUG 44338 / CIP 107171 / LMG 19424 / R1) (Ralstonia taiwanensis (strain LMG 19424))).